The chain runs to 324 residues: Putative glycosyltransferase R655 (324 aa).

This sequence belongs to the glycosyltransferase 25 family.

In Acanthamoeba polyphaga (Amoeba), this protein is Putative glycosyltransferase R655.